Reading from the N-terminus, the 454-residue chain is GA-binding protein alpha chain (454 aa).

The 84-residue stretch at 168–251 (AALEGYRKEQ…SHLELLRKYV (84 aa)) folds into the PNT domain. Positions 295 to 316 (KVQRSPRISGEDRSSPGNRTGN) are disordered. Serine 303 is subject to Phosphoserine. The segment at residues 320-400 (IQLWQFLLEL…QGKRFVYKFV (81 aa)) is a DNA-binding region (ETS).

This sequence belongs to the ETS family. As to quaternary structure, heterotetramer of two alpha and two beta subunits. Ubiquitous.

The protein localises to the nucleus. In terms of biological role, transcription factor capable of interacting with purine rich repeats (GA repeats). Positively regulates transcription of transcriptional repressor Rhit/Zpf13. This Mus musculus (Mouse) protein is GA-binding protein alpha chain (Gabpa).